Here is a 382-residue protein sequence, read N- to C-terminus: S-adenosylmethionine synthase (382 aa).

His-16 serves as a coordination point for ATP. Asp-18 contacts Mg(2+). Residue Glu-44 participates in K(+) binding. L-methionine contacts are provided by Glu-57 and Gln-100. Positions 100–110 (QSPDIAQGVDN) are flexible loop. ATP-binding positions include 165-167 (DAK), 231-232 (RF), Asp-240, 246-247 (RK), and Lys-267. Asp-240 serves as a coordination point for L-methionine. Lys-271 serves as a coordination point for L-methionine.

It belongs to the AdoMet synthase family. Homotetramer; dimer of dimers. The cofactor is Mg(2+). K(+) is required as a cofactor.

It localises to the cytoplasm. The catalysed reaction is L-methionine + ATP + H2O = S-adenosyl-L-methionine + phosphate + diphosphate. It functions in the pathway amino-acid biosynthesis; S-adenosyl-L-methionine biosynthesis; S-adenosyl-L-methionine from L-methionine: step 1/1. Its function is as follows. Catalyzes the formation of S-adenosylmethionine (AdoMet) from methionine and ATP. The overall synthetic reaction is composed of two sequential steps, AdoMet formation and the subsequent tripolyphosphate hydrolysis which occurs prior to release of AdoMet from the enzyme. This chain is S-adenosylmethionine synthase, found in Legionella pneumophila (strain Paris).